Consider the following 847-residue polypeptide: MEPWKQCAQWLIHSKVLPPNHRVTWDSAQVFDLAQTLRDGVLLCQLLNNLRPHSINLKEINLRPQMSQFLCLKNIRTFLAACCDTFGMRKSELFEAFDLFDVRDFGKVIETLSRLSRTPIALATGIRPFPTEESINDEDIYKGLPDLIDETRVEDEEDLYDCVYGEDEGGEVYEDLMKAEEAQQPKSQENDIRSCCLAEIRQTEEKYTETLESIEKYFMAPLKRFLTAAEFDSVFINIPDLVKVHRSLMQEIHDSIVNKDDQNLYQVFINYKERLVIYGQYCSGVESAISNLDYISKTKEDVKLKLEECSKRANNGKFTLRDLLVVPMQRVLKYHLLLQELVKHTHDPMEKANLKLALDAMKDLAQYVNEVKRDNETLREIKQFQLSIENLNQPVLLFGRPQGDGEIRITTLDKHTKQERHIFLFDLAVIVCKRKGDNYEMKEIIDLQQYKIANNPTTDKENKKWSYGFYLIHTQGQNGLEFYCKTKDLKKKWLEQFEMALSNIRPDYADSNFHDFKMHTFTRVTSCRVCQMLLRGTFYQGYLCFKCGAKAHKECLGRVDNCGRVNSVEQGPFKPPEKRTNGLRRASRQVDPGLPKMQVIRNYTGTPAPGLHEGPPLHIQAGDTVELLRGDAHSVFWQGRNLASGEVGFFPSDAVKPSPCVPKPVDYSCQPWYAGPMERLQAETELINRVNSTYLVRHRTKESGEYAISIKYNNEAKHIKILTRDGFFHIAENRKFKSLMELVEYYKHHSLKEGFRTLDTTLQFPYKEPEQPAGQRGNRTGNSLLSPKVLGIAIARYDFCARDMRELSLLKGDMVKIYTKMSANGWWRGEVNGRVGWFPSTYVEEDE.

Positions 1 to 119 (MEPWKQCAQW…ETLSRLSRTP (119 aa)) constitute a Calponin-homology (CH) domain. Phosphotyrosine is present on Tyr141. Positions 192 to 371 (IRSCCLAEIR…KDLAQYVNEV (180 aa)) constitute a DH domain. The PH domain maps to 400–502 (RPQGDGEIRI…WLEQFEMALS (103 aa)). The Phorbol-ester/DAG-type zinc finger occupies 513-562 (FHDFKMHTFTRVTSCRVCQMLLRGTFYQGYLCFKCGAKAHKECLGRVDNC). A sufficient for interaction with ROS1 region spans residues 560-847 (DNCGRVNSVE…FPSTYVEEDE (288 aa)). The SH3 1 domain occupies 592–660 (PGLPKMQVIR…PSDAVKPSPC (69 aa)). Residues 672–766 (WYAGPMERLQ…TLDTTLQFPY (95 aa)) enclose the SH2 domain. The SH3 2 domain occupies 788 to 847 (KVLGIAIARYDFCARDMRELSLLKGDMVKIYTKMSANGWWRGEVNGRVGWFPSTYVEEDE).

In terms of assembly, interacts with the PH domain of APS. Interacts with ROS1; constitutive interaction that mediates VAV3 phosphorylation. Interacts (via SH2 domains) with the phosphorylated form of EPHA2. Post-translationally, phosphorylated. Phosphorylation can be mediated by ROS1. In osteoclasts, undergoes tyrosine phosphorylation in response to CSF1. As to expression, abundantly expressed in osteoclasts and mature osteoblasts. Also expressed in bone marrow macrophages (at protein level):.

Its function is as follows. Exchange factor for GTP-binding proteins RhoA, RhoG and, to a lesser extent, Rac1. Binds physically to the nucleotide-free states of those GTPases. Plays an important role in angiogenesis. Its recruitment by phosphorylated EPHA2 is critical for EFNA1-induced RAC1 GTPase activation and vascular endothelial cell migration and assembly. May be important for integrin-mediated signaling, at least in some cell types. In osteoclasts, along with SYK tyrosine kinase, required for signaling through integrin alpha-v/beta-1 (ITAGV-ITGB1), a crucial event for osteoclast proper cytoskeleton organization and function. This signaling pathway involves RAC1, but not RHO, activation. Necessary for proper wound healing. In the course of wound healing, required for the phagocytotic cup formation preceding macrophage phagocytosis of apoptotic neutrophils. Responsible for integrin beta-2-mediated macrophage adhesion and, to a lesser extent, contributes to beta-3-mediated adhesion. Does not affect integrin beta-1-mediated adhesion. This is Guanine nucleotide exchange factor VAV3 (Vav3) from Mus musculus (Mouse).